The sequence spans 323 residues: MNKVEIAGLGSYVPPKILDNNDLSLIVDTNDEWIRCRTGIRQRRISQGENTSEMATKAAINAMKSANIKAEDIDLIVVATITPDNFIPSTACIVQKNIKAVNATCFDISAACSGLIYGLDIGTQFIRSGRFKVVLAIGAETLSKILNWQDRSTCILFGDGAAAAILQMGEEESILSMYTGSDGFQGDALTCPAVPVNNPCTTSDFQKSVVTMDGKAIFKFAVKILVKSVKMLLKEQEVTLEEIKYIIPHQANYRIIECAAKILKVDIDKFYINLDLYGNTSAASVGIALDEVYKKNLVEKGDKVLIIGFGGGLTYGGLLINVI.

Residues Cys112 and His249 contribute to the active site. An ACP-binding region spans residues 250 to 254 (QANYR). Residue Asn279 is part of the active site.

It belongs to the thiolase-like superfamily. FabH family. Homodimer.

Its subcellular location is the cytoplasm. It carries out the reaction malonyl-[ACP] + acetyl-CoA + H(+) = 3-oxobutanoyl-[ACP] + CO2 + CoA. It functions in the pathway lipid metabolism; fatty acid biosynthesis. In terms of biological role, catalyzes the condensation reaction of fatty acid synthesis by the addition to an acyl acceptor of two carbons from malonyl-ACP. Catalyzes the first condensation reaction which initiates fatty acid synthesis and may therefore play a role in governing the total rate of fatty acid production. Possesses both acetoacetyl-ACP synthase and acetyl transacylase activities. Its substrate specificity determines the biosynthesis of branched-chain and/or straight-chain of fatty acids. This Clostridium kluyveri (strain NBRC 12016) protein is Beta-ketoacyl-[acyl-carrier-protein] synthase III.